A 218-amino-acid polypeptide reads, in one-letter code: UPF0711 protein C18orf21 homolog (218 aa).

A Phosphoserine modification is found at serine 126. Low complexity predominate over residues 130 to 146 (ASAASKASPKTPKRAAA). The disordered stretch occupies residues 130–192 (ASAASKASPK…NGSKRKKHFS (63 aa)). Position 140 is a phosphothreonine (threonine 140). A compositionally biased stretch (polar residues) spans 147–156 (GSTNISQSVH). Over residues 161–172 (RSPSSTVRTPTS) the composition is skewed to low complexity. The segment covering 173–183 (GQSTPICSSRN) has biased composition (polar residues).

Belongs to the UPF0711 family.

This Rattus norvegicus (Rat) protein is UPF0711 protein C18orf21 homolog.